Reading from the N-terminus, the 180-residue chain is Ribulose bisphosphate carboxylase small subunit, chloroplastic 2 (180 aa).

Residues 1 to 54 constitute a chloroplast transit peptide; the sequence is MASMMSNAAVVGRTTPAQASMVAPFTGLKSVSAFPVTKKSNDITSIASNGGRVQ.

This sequence belongs to the RuBisCO small chain family. As to quaternary structure, heterohexadecamer of 8 large and 8 small subunits.

It localises to the plastid. The protein localises to the chloroplast. Functionally, ruBisCO catalyzes two reactions: the carboxylation of D-ribulose 1,5-bisphosphate, the primary event in carbon dioxide fixation, as well as the oxidative fragmentation of the pentose substrate. Both reactions occur simultaneously and in competition at the same active site. Although the small subunit is not catalytic it is essential for maximal activity. This Mesembryanthemum crystallinum (Common ice plant) protein is Ribulose bisphosphate carboxylase small subunit, chloroplastic 2.